The following is a 466-amino-acid chain: tRNA-2-methylthio-N(6)-dimethylallyladenosine synthase (466 aa).

Residues 22–139 enclose the MTTase N-terminal domain; that stretch reads RRYYVWTVGC…VVALAPNPIY (118 aa). Residues Cys-31, Cys-67, Cys-101, Cys-166, Cys-170, and Cys-173 each coordinate [4Fe-4S] cluster. Positions 152-386 constitute a Radical SAM core domain; the sequence is SHPPVSVHVP…EQLQEQIATE (235 aa). The region spanning 389–449 is the TRAM domain; sequence ARFLGQTVEV…PWSLQGVPQL (61 aa).

Belongs to the methylthiotransferase family. MiaB subfamily. Monomer. [4Fe-4S] cluster is required as a cofactor.

It is found in the cytoplasm. It catalyses the reaction N(6)-dimethylallyladenosine(37) in tRNA + (sulfur carrier)-SH + AH2 + 2 S-adenosyl-L-methionine = 2-methylsulfanyl-N(6)-dimethylallyladenosine(37) in tRNA + (sulfur carrier)-H + 5'-deoxyadenosine + L-methionine + A + S-adenosyl-L-homocysteine + 2 H(+). In terms of biological role, catalyzes the methylthiolation of N6-(dimethylallyl)adenosine (i(6)A), leading to the formation of 2-methylthio-N6-(dimethylallyl)adenosine (ms(2)i(6)A) at position 37 in tRNAs that read codons beginning with uridine. The sequence is that of tRNA-2-methylthio-N(6)-dimethylallyladenosine synthase from Chloroflexus aurantiacus (strain ATCC 29366 / DSM 635 / J-10-fl).